We begin with the raw amino-acid sequence, 114 residues long: Large ribosomal subunit protein uL18 (114 aa).

The protein belongs to the universal ribosomal protein uL18 family. As to quaternary structure, part of the 50S ribosomal subunit; part of the 5S rRNA/L5/L18/L25 subcomplex. Contacts the 5S and 23S rRNAs.

This is one of the proteins that bind and probably mediate the attachment of the 5S RNA into the large ribosomal subunit, where it forms part of the central protuberance. In Bacteroides thetaiotaomicron (strain ATCC 29148 / DSM 2079 / JCM 5827 / CCUG 10774 / NCTC 10582 / VPI-5482 / E50), this protein is Large ribosomal subunit protein uL18.